We begin with the raw amino-acid sequence, 334 residues long: HTH-type transcriptional repressor PurR (334 aa).

An HTH lacI-type domain is found at 2–56 (ATIKDVARLAGVSTTTVSHVINKTRFVAEATQEKVMKAVDELNYAPSAVARSLKC). Positions 4–23 (IKDVARLAGVSTTTVSHVIN) form a DNA-binding region, H-T-H motif. A DNA-binding region spans residues 48–56 (SAVARSLKC). Residues phenylalanine 73, lysine 189, phenylalanine 220, and aspartate 274 each coordinate hypoxanthine.

Homodimer.

The protein operates within purine metabolism; purine nucleotide biosynthesis [regulation]. Functionally, is the main repressor of the genes involved in the de novo synthesis of purine nucleotides, regulating purB, purC, purEK, purF, purHD, purL, purMN and guaBA expression. PurR is allosterically activated to bind its cognate DNA by binding the purine corepressors, hypoxanthine or guanine, thereby effecting transcription repression. The polypeptide is HTH-type transcriptional repressor PurR (Vibrio parahaemolyticus serotype O3:K6 (strain RIMD 2210633)).